The following is a 319-amino-acid chain: Ribonuclease Z (319 aa).

The Zn(2+) site is built by His62, His64, Asp66, His67, His139, Asp209, and His268. Asp66 functions as the Proton acceptor in the catalytic mechanism.

The protein belongs to the RNase Z family. Homodimer. Zn(2+) is required as a cofactor.

It catalyses the reaction Endonucleolytic cleavage of RNA, removing extra 3' nucleotides from tRNA precursor, generating 3' termini of tRNAs. A 3'-hydroxy group is left at the tRNA terminus and a 5'-phosphoryl group is left at the trailer molecule.. In terms of biological role, zinc phosphodiesterase, which displays some tRNA 3'-processing endonuclease activity. Probably involved in tRNA maturation, by removing a 3'-trailer from precursor tRNA. The protein is Ribonuclease Z of Pseudomonas putida (strain ATCC 700007 / DSM 6899 / JCM 31910 / BCRC 17059 / LMG 24140 / F1).